Here is a 318-residue protein sequence, read N- to C-terminus: Transaldolase (318 aa).

Lys-132 acts as the Schiff-base intermediate with substrate in catalysis.

This sequence belongs to the transaldolase family. Type 1 subfamily. Homodimer.

The protein localises to the cytoplasm. The enzyme catalyses D-sedoheptulose 7-phosphate + D-glyceraldehyde 3-phosphate = D-erythrose 4-phosphate + beta-D-fructose 6-phosphate. Its pathway is carbohydrate degradation; pentose phosphate pathway; D-glyceraldehyde 3-phosphate and beta-D-fructose 6-phosphate from D-ribose 5-phosphate and D-xylulose 5-phosphate (non-oxidative stage): step 2/3. Functionally, transaldolase is important for the balance of metabolites in the pentose-phosphate pathway. This chain is Transaldolase, found in Shewanella baltica (strain OS195).